The sequence spans 638 residues: Threonine--tRNA ligase (638 aa).

Positions 1-61 (MPIITLPDGS…NKDSKVVIIT (61 aa)) constitute a TGS domain. Positions 242-533 (DHRKLGKKHS…LIEQYEAKFP (292 aa)) are catalytic. Residues Cys333, His384, and His510 each contribute to the Zn(2+) site.

This sequence belongs to the class-II aminoacyl-tRNA synthetase family. Homodimer. The cofactor is Zn(2+).

The protein localises to the cytoplasm. It carries out the reaction tRNA(Thr) + L-threonine + ATP = L-threonyl-tRNA(Thr) + AMP + diphosphate + H(+). Catalyzes the attachment of threonine to tRNA(Thr) in a two-step reaction: L-threonine is first activated by ATP to form Thr-AMP and then transferred to the acceptor end of tRNA(Thr). Also edits incorrectly charged L-seryl-tRNA(Thr). The chain is Threonine--tRNA ligase from Prochlorococcus marinus (strain MIT 9301).